The primary structure comprises 493 residues: Succinate-semialdehyde dehydrogenase [NADP(+)] 2 (493 aa).

242–247 (GSTNVG) provides a ligand contact to NAD(+). Glu264 is a catalytic residue. Cys298 serves as the catalytic Nucleophile.

It belongs to the aldehyde dehydrogenase family. Homotetramer.

The protein localises to the cytoplasm. It carries out the reaction succinate semialdehyde + NAD(+) + H2O = succinate + NADH + 2 H(+). The catalysed reaction is succinate semialdehyde + NADP(+) + H2O = succinate + NADPH + 2 H(+). The protein operates within amino-acid degradation; 4-aminobutanoate degradation. Functionally, catalyzes the oxidation of succinate semialdehyde to succinate. Can utilize both NAD(+) or NADP(+) as a coenzyme. Functions in the GABA shunt, which allows to bypass 2 reactions in the TCA cycle by removing alpha-ketoglutarate from the cycle and feeding succinate and NADH back into the cycle. The polypeptide is Succinate-semialdehyde dehydrogenase [NADP(+)] 2 (ssd2) (Schizosaccharomyces pombe (strain 972 / ATCC 24843) (Fission yeast)).